The following is a 642-amino-acid chain: 1,4-alpha-glucan branching enzyme GlgB (642 aa).

D304 serves as the catalytic Nucleophile. The active-site Proton donor is the E355.

This sequence belongs to the glycosyl hydrolase 13 family. GlgB subfamily. Monomer.

The catalysed reaction is Transfers a segment of a (1-&gt;4)-alpha-D-glucan chain to a primary hydroxy group in a similar glucan chain.. Its pathway is glycan biosynthesis; glycogen biosynthesis. In terms of biological role, catalyzes the formation of the alpha-1,6-glucosidic linkages in glycogen by scission of a 1,4-alpha-linked oligosaccharide from growing alpha-1,4-glucan chains and the subsequent attachment of the oligosaccharide to the alpha-1,6 position. This chain is 1,4-alpha-glucan branching enzyme GlgB, found in Streptococcus pneumoniae serotype 4 (strain ATCC BAA-334 / TIGR4).